A 261-amino-acid polypeptide reads, in one-letter code: Cobalt transport protein CbiM (261 aa).

The signal sequence occupies residues 1–33 (MLRRVLASKRASLILMGMLSFYIIVSASAPAYA). The next 7 helical transmembrane spans lie at 41 to 61 (LPAG…LLGV), 76 to 96 (LLLA…LPSV), 108 to 128 (LGSV…VLLF), 140 to 160 (TLGA…YWIY), 172 to 192 (IAIF…TSVQ), 197 to 217 (FPAP…IFAI), and 220 to 240 (IPLA…LQSY).

This sequence belongs to the CbiM family. Forms an energy-coupling factor (ECF) transporter complex composed of an ATP-binding protein (A component, CbiO), a transmembrane protein (T component, CbiQ) and 2 possible substrate-capture proteins (S components, CbiM and CbiN) of unknown stoichimetry.

It localises to the cell inner membrane. It participates in cofactor biosynthesis; adenosylcobalamin biosynthesis. Part of the energy-coupling factor (ECF) transporter complex CbiMNOQ involved in cobalt import. The chain is Cobalt transport protein CbiM from Nostoc sp. (strain PCC 7120 / SAG 25.82 / UTEX 2576).